Here is a 364-residue protein sequence, read N- to C-terminus: DNA polymerase IV (364 aa).

One can recognise a UmuC domain in the interval 14–198; that stretch reads IIHIDMDAFF…LPIEKFHGVG (185 aa). Residues D18 and D116 each contribute to the Mg(2+) site. E117 is an active-site residue.

It belongs to the DNA polymerase type-Y family. In terms of assembly, monomer. Mg(2+) serves as cofactor.

It is found in the cytoplasm. The enzyme catalyses DNA(n) + a 2'-deoxyribonucleoside 5'-triphosphate = DNA(n+1) + diphosphate. Poorly processive, error-prone DNA polymerase involved in untargeted mutagenesis. Copies undamaged DNA at stalled replication forks, which arise in vivo from mismatched or misaligned primer ends. These misaligned primers can be extended by PolIV. Exhibits no 3'-5' exonuclease (proofreading) activity. May be involved in translesional synthesis, in conjunction with the beta clamp from PolIII. In Streptococcus pyogenes serotype M2 (strain MGAS10270), this protein is DNA polymerase IV.